A 348-amino-acid polypeptide reads, in one-letter code: Succinylglutamate desuccinylase (348 aa).

Residues His-64, Glu-67, and His-164 each contribute to the Zn(2+) site. Glu-228 is an active-site residue.

Belongs to the AspA/AstE family. Succinylglutamate desuccinylase subfamily. Requires Zn(2+) as cofactor.

The catalysed reaction is N-succinyl-L-glutamate + H2O = L-glutamate + succinate. The protein operates within amino-acid degradation; L-arginine degradation via AST pathway; L-glutamate and succinate from L-arginine: step 5/5. Transforms N(2)-succinylglutamate into succinate and glutamate. In Shewanella amazonensis (strain ATCC BAA-1098 / SB2B), this protein is Succinylglutamate desuccinylase.